Reading from the N-terminus, the 473-residue chain is Argininosuccinate lyase (473 aa).

The 2-(N(omega)-L-arginino)succinate site is built by S34, N121, and T166. Residue H167 is the Proton acceptor of the active site. S289 serves as the catalytic Proton donor. Residues N297, Y329, and Q334 each contribute to the 2-(N(omega)-L-arginino)succinate site.

This sequence belongs to the lyase 1 family. Argininosuccinate lyase subfamily.

It carries out the reaction 2-(N(omega)-L-arginino)succinate = fumarate + L-arginine. It functions in the pathway amino-acid biosynthesis; L-arginine biosynthesis; L-arginine from L-ornithine and carbamoyl phosphate: step 3/3. This chain is Argininosuccinate lyase (ARG7), found in Chlamydomonas reinhardtii (Chlamydomonas smithii).